Reading from the N-terminus, the 261-residue chain is Leucine-rich repeat-containing protein 61 (261 aa).

LRR repeat units lie at residues 54-75 (GLEW…ASLR), 76-97 (QLAV…AACE), and 98-119 (NLQC…QCLA). Positions 138–183 (NPLCASPCYWASVRELLPGLKVLDGERVSGRGSDFYQLCRDLDSSL) constitute an LRRCT domain.

This chain is Leucine-rich repeat-containing protein 61 (LRRC61), found in Bos taurus (Bovine).